The chain runs to 542 residues: Glutamyl-tRNA(Gln) amidotransferase subunit A, mitochondrial (542 aa).

Active-site charge relay system residues include Lys55 and Ser143. The active-site Acyl-ester intermediate is the Ser167.

Belongs to the amidase family. GatA subfamily. In terms of assembly, subunit of the heterotrimeric GatCAB amidotransferase (AdT) complex, composed of A, B and C subunits.

The protein localises to the mitochondrion. It carries out the reaction L-glutamyl-tRNA(Gln) + L-glutamine + ATP + H2O = L-glutaminyl-tRNA(Gln) + L-glutamate + ADP + phosphate + H(+). In terms of biological role, allows the formation of correctly charged Gln-tRNA(Gln) through the transamidation of misacylated Glu-tRNA(Gln) in the mitochondria. The reaction takes place in the presence of glutamine and ATP through an activated gamma-phospho-Glu-tRNA(Gln). The protein is Glutamyl-tRNA(Gln) amidotransferase subunit A, mitochondrial of Neurospora crassa (strain ATCC 24698 / 74-OR23-1A / CBS 708.71 / DSM 1257 / FGSC 987).